Consider the following 141-residue polypeptide: MKLETQYHGIIEYNENNIINLVKGMSGFENLKKFILVGIENNEVFSLFHSMEDKETAFIVSSPFYVKADYEVNLSEELVKELKIDSEKDVLIINTVNLSKDIKKMTTNLGAPIIININKHLGKQIIISDDEKMIKYPMIHS.

The protein belongs to the FliW family. In terms of assembly, interacts with translational regulator CsrA and flagellin(s).

It localises to the cytoplasm. Functionally, acts as an anti-CsrA protein, binds CsrA and prevents it from repressing translation of its target genes, one of which is flagellin. Binds to flagellin and participates in the assembly of the flagellum. The sequence is that of Flagellar assembly factor FliW from Clostridium acetobutylicum (strain ATCC 824 / DSM 792 / JCM 1419 / IAM 19013 / LMG 5710 / NBRC 13948 / NRRL B-527 / VKM B-1787 / 2291 / W).